The sequence spans 343 residues: Pseudaminic acid synthase (343 aa).

The 57-residue stretch at 287–343 (SLYASKDIKKGEMFSEENVKSVRPSFGLHPKFYQELLGKKASKDIKFGDALKQGDFQ) folds into the AFP-like domain.

It belongs to the pseudaminic acid synthase family. Requires a divalent metal cation as cofactor.

It catalyses the reaction 2,4-diacetamido-2,4,6-trideoxy-beta-L-altrose + phosphoenolpyruvate + H2O = pseudaminate + phosphate. Its function is as follows. Catalyzes the fifth step in the biosynthesis of pseudaminic acid, a sialic-acid-like sugar that is used to modify flagellin. Catalyzes the condensation of phosphoenolpyruvate with 2,4-diacetamido-2,4,6-trideoxy-beta-l-altropyranose, forming pseudaminic acid. The chain is Pseudaminic acid synthase (pseI) from Campylobacter jejuni subsp. jejuni serotype O:2 (strain ATCC 700819 / NCTC 11168).